Consider the following 371-residue polypeptide: Uroporphyrinogen decarboxylase (371 aa).

Over residues 1–14 (MARWATMSTETTGT) the composition is skewed to polar residues. Residues 1-30 (MARWATMSTETTGTGARDEGPRPGDPADSP) are disordered. Substrate is bound by residues 49–53 (RQAGR), D98, Y173, S228, and H342.

It belongs to the uroporphyrinogen decarboxylase family. As to quaternary structure, homodimer.

Its subcellular location is the cytoplasm. It catalyses the reaction uroporphyrinogen III + 4 H(+) = coproporphyrinogen III + 4 CO2. The protein operates within porphyrin-containing compound metabolism; protoporphyrin-IX biosynthesis; coproporphyrinogen-III from 5-aminolevulinate: step 4/4. Functionally, catalyzes the decarboxylation of four acetate groups of uroporphyrinogen-III to yield coproporphyrinogen-III. This chain is Uroporphyrinogen decarboxylase, found in Salinispora tropica (strain ATCC BAA-916 / DSM 44818 / JCM 13857 / NBRC 105044 / CNB-440).